A 369-amino-acid polypeptide reads, in one-letter code: L-lactate oxidase (369 aa).

The FMN hydroxy acid dehydrogenase domain maps to 13–369; it reads EKKLNVLNLD…KNAKLLNIRY (357 aa). Pyruvate is bound at residue Tyr-39. FMN-binding positions include 92–94, Ser-121, and Gln-143; that span reads PAA. Residue Tyr-145 coordinates pyruvate. Thr-171 serves as a coordination point for FMN. Arg-180 is a pyruvate binding site. Positions 240 and 262 each coordinate FMN. The pyruvate site is built by His-264 and Arg-267. The Proton acceptor role is filled by His-264. FMN-binding positions include 295-299 and Arg-319; that span reads DSGIR.

This sequence belongs to the FMN-dependent alpha-hydroxy acid dehydrogenase family. Homotetramer. It depends on FMN as a cofactor.

It catalyses the reaction (S)-lactate + O2 = pyruvate + H2O2. Catalyzes the oxidation of (S)-lactate (L-lactate) to pyruvate, with a reduction of O2 to H2O2. May be involved in the utilization of L-lactate as an energy source for growth. The polypeptide is L-lactate oxidase (Lentilactobacillus hilgardii (strain ATCC 8290 / DSM 20176 / CCUG 30140 / JCM 1155 / KCTC 3500 / NBRC 15886 / NCIMB 8040 / NRRL B-1843 / 9)).